Consider the following 147-residue polypeptide: MSFLSAEEKGLVNGLWSKVNVDEVGGEALGRLLVVYPWTQRFFQSFGDLSSADAIMSNAKVKAHGKKVLNSFSDGLKNIDDLKGAFAKLSELHCDKLHVDPENFRLLGNVLVCVLAHHFGHEFNPQVQAAFQKVVAGVASALAHRYH.

The residue at position 2 (serine 2) is an N-acetylserine. In terms of domain architecture, Globin spans 3–147; it reads FLSAEEKGLV…VASALAHRYH (145 aa). At lysine 18 the chain carries N6-succinyllysine. Residues serine 45 and serine 51 each carry the phosphoserine modification. Lysine 60 is modified (N6-succinyllysine). Heme b-binding residues include histidine 64 and histidine 93. Arginine 105 is subject to Asymmetric dimethylarginine.

Belongs to the globin family. As to quaternary structure, heterotetramer of two alpha chains and two beta chains. In terms of tissue distribution, red blood cells.

Involved in oxygen transport from the lung to the various peripheral tissues. This is Hemoglobin subunit beta-1 (HBB1) from Panthera onca (Jaguar).